We begin with the raw amino-acid sequence, 81 residues long: Sulfur carrier protein TusA (81 aa).

The active-site Cysteine persulfide intermediate is the Cys-19.

This sequence belongs to the sulfur carrier protein TusA family.

The protein localises to the cytoplasm. Its function is as follows. Sulfur carrier protein which probably makes part of a sulfur-relay system. The chain is Sulfur carrier protein TusA from Shewanella baltica (strain OS185).